The sequence spans 221 residues: Extracellular superoxide dismutase [Cu-Zn] (221 aa).

The signal sequence occupies residues 1–19 (MKTRVVLILALSVCIEAAS). A glycan (N-linked (GlcNAc...) asparagine) is linked at N56. Cu cation contacts are provided by H70, H72, and H87. C81 and C170 are disulfide-bonded. Zn(2+) contacts are provided by H87, H95, H104, and D107. H144 serves as a coordination point for Cu cation.

Belongs to the Cu-Zn superoxide dismutase family. The cofactor is Cu cation. Zn(2+) is required as a cofactor. In terms of tissue distribution, isoform 2 is preferentially expressed in eggs.

It is found in the secreted. The protein resides in the extracellular space. Its subcellular location is the membrane. It carries out the reaction 2 superoxide + 2 H(+) = H2O2 + O2. Its function is as follows. Protects cells against oxidative stress by converting superoxide radicals to hydrogen peroxide. Oxidative stress is involved in various biological dysfunctions and senescence. In Caenorhabditis elegans, this protein is Extracellular superoxide dismutase [Cu-Zn] (sod-4).